The primary structure comprises 283 residues: Polyamine aminopropyltransferase (283 aa).

In terms of domain architecture, PABS spans 5 to 241; sequence NNWYIEHFER…GWWSVTLARK (237 aa). S-methyl-5'-thioadenosine is bound at residue Gln35. Positions 66 and 90 each coordinate spermidine. Residues Asp110 and 141–142 contribute to the S-methyl-5'-thioadenosine site; that span reads DG. Residue Asp160 is the Proton acceptor of the active site. 160 to 163 contributes to the spermidine binding site; it reads DSTD. An S-methyl-5'-thioadenosine-binding site is contributed by Pro167.

It belongs to the spermidine/spermine synthase family. As to quaternary structure, homodimer or homotetramer.

It is found in the cytoplasm. It catalyses the reaction S-adenosyl 3-(methylsulfanyl)propylamine + putrescine = S-methyl-5'-thioadenosine + spermidine + H(+). The protein operates within amine and polyamine biosynthesis; spermidine biosynthesis; spermidine from putrescine: step 1/1. Catalyzes the irreversible transfer of a propylamine group from the amino donor S-adenosylmethioninamine (decarboxy-AdoMet) to putrescine (1,4-diaminobutane) to yield spermidine. The polypeptide is Polyamine aminopropyltransferase (Stenotrophomonas maltophilia (strain R551-3)).